The sequence spans 302 residues: Methionyl-tRNA formyltransferase (302 aa).

Position 108-111 (108-111 (SLLP)) interacts with (6S)-5,6,7,8-tetrahydrofolate. Residues 279-288 (KRPMEPEEFL) show a composition bias toward basic and acidic residues. Residues 279 to 302 (KRPMEPEEFLRGFPLPEGSRAHTS) form a disordered region.

The protein belongs to the Fmt family.

It carries out the reaction L-methionyl-tRNA(fMet) + (6R)-10-formyltetrahydrofolate = N-formyl-L-methionyl-tRNA(fMet) + (6S)-5,6,7,8-tetrahydrofolate + H(+). Functionally, attaches a formyl group to the free amino group of methionyl-tRNA(fMet). The formyl group appears to play a dual role in the initiator identity of N-formylmethionyl-tRNA by promoting its recognition by IF2 and preventing the misappropriation of this tRNA by the elongation apparatus. The polypeptide is Methionyl-tRNA formyltransferase (Cereibacter sphaeroides (strain ATCC 17023 / DSM 158 / JCM 6121 / CCUG 31486 / LMG 2827 / NBRC 12203 / NCIMB 8253 / ATH 2.4.1.) (Rhodobacter sphaeroides)).